Consider the following 500-residue polypeptide: Serine/threonine protein phosphatase 2A 57 kDa regulatory subunit B' kappa isoform (500 aa).

A disordered region spans residues 1–53; sequence MFKQFLSKLPRKSSKSDSGELNRSSSGPVSSPVQRSGTSGGGSGPVRSNSGKR. Residues 21-37 are compositionally biased toward polar residues; that stretch reads LNRSSSGPVSSPVQRSG.

It belongs to the phosphatase 2A regulatory subunit B56 family. PP2A consists of a common heteromeric enzyme, composed of a catalytic subunit (subunits C), a constant regulatory subunit (subunit A), and a variety of regulatory subunits such as subunits B (the R2/B/PR55/B55, R3/B''/PR72/PR130/PR59 and R5/B'/B56 families).

It localises to the cytoplasm. In terms of biological role, the B regulatory subunit may modulate substrate selectivity and catalytic activity, and may also direct the localization of the catalytic enzyme to a particular subcellular compartment. The polypeptide is Serine/threonine protein phosphatase 2A 57 kDa regulatory subunit B' kappa isoform (B'KAPPA) (Arabidopsis thaliana (Mouse-ear cress)).